Here is a 231-residue protein sequence, read N- to C-terminus: Cytidylate kinase (231 aa).

Residue 17 to 25 (GPTASGKGT) participates in ATP binding.

The protein belongs to the cytidylate kinase family. Type 1 subfamily.

It is found in the cytoplasm. The catalysed reaction is CMP + ATP = CDP + ADP. It carries out the reaction dCMP + ATP = dCDP + ADP. The chain is Cytidylate kinase from Ralstonia pickettii (strain 12J).